Here is a 275-residue protein sequence, read N- to C-terminus: MKTELRSCAACGEPISDRFFLEVGGCSWHAHCLRCCMCMCPLDRQQSCFIRERQVYCKADYSKNFGAKCSKCCRGISASDWVRRARELVFHLACFACDQCGRQLSTGEQFALMDDRVLCKAHYLETVEGGTTSSDEGCDGDGYHKSKTKRVRTTFTEEQLQVLQANFQIDSNPDGQDLERIASVTGLSKRVTQVWFQNSRARQKKHIHAGKNKIREPEGSSFARHINLQLTYSFQNNAQNPMHLNGSKAGLYPTHESSMDELSQDSSVHCMPSEV.

LIM zinc-binding domains lie at 6-67 and 68-129; these read RSCA…NFGA and KCSK…TVEG. A Phosphothreonine modification is found at T126. A DNA-binding region (homeobox) is located at residues 148–207; the sequence is TKRVRTTFTEEQLQVLQANFQIDSNPDGQDLERIASVTGLSKRVTQVWFQNSRARQKKHI. The disordered stretch occupies residues 253 to 275; the sequence is PTHESSMDELSQDSSVHCMPSEV.

In terms of tissue distribution, first detected in neuroblasts in stage 9 embryos. Expressed in all 10 abdominal segments and in the labial segment during early embryogenesis. Expressed in the stage 14 developing epithelium. By embryonic stage 16, expression is refined to the abdominal histoblasts and salivary gland imaginal ring cells. Expressed in both larval and imaginal cells between the salivary gland and the salivary gland imaginal ring, in late third instar larvae. Also expressed in specific areas of the larval wing, leg and eye-antennal disks.

It localises to the nucleus. Functionally, probable transcription factor. Required for the establishment of a subset of imaginal tissues: the abdominal histoblasts and the salivary gland imaginal rings. This chain is LIM/homeobox protein Awh, found in Drosophila melanogaster (Fruit fly).